The sequence spans 181 residues: MNQKAVILDEQAIRRALTRIAHEMIERNKGMNNCILVGIKTRGIYLAKRLAERIEQIEGNPVTVGEIDITLYRDDLSKKTSNDEPLVKGADIPVDITDQKVILVDDVLYTGRTVRAGMDALVDVGRPSSIQLAVLVDRGHRELPIRADYIGKNIPTSKSEKVMVQLDEVDQNDLVAIYENE.

Residues 41-42 (TR), 105-113 (DDVLYTGRT), Arg138, and Val162 each bind substrate. The short motif at 101–113 (VILVDDVLYTGRT) is the PRPP-binding element.

It belongs to the purine/pyrimidine phosphoribosyltransferase family. PyrR subfamily. As to quaternary structure, homodimer and homohexamer; in equilibrium.

It carries out the reaction UMP + diphosphate = 5-phospho-alpha-D-ribose 1-diphosphate + uracil. Functionally, regulates transcriptional attenuation of the pyrimidine nucleotide (pyr) operon by binding in a uridine-dependent manner to specific sites on pyr mRNA. This disrupts an antiterminator hairpin in the RNA and favors formation of a downstream transcription terminator, leading to a reduced expression of downstream genes. Its function is as follows. Also displays a weak uracil phosphoribosyltransferase activity which is not physiologically significant. The polypeptide is Bifunctional protein PyrR (pyrR) (Bacillus subtilis (strain 168)).